Reading from the N-terminus, the 255-residue chain is 4-hydroxy-tetrahydrodipicolinate reductase (255 aa).

NAD(+)-binding positions include 8-13, 88-90, and 112-115; these read GATGRV, GTT, and ATNM. Histidine 144 (proton donor/acceptor) is an active-site residue. Histidine 145 contributes to the (S)-2,3,4,5-tetrahydrodipicolinate binding site. Lysine 148 (proton donor) is an active-site residue. 154–155 is a binding site for (S)-2,3,4,5-tetrahydrodipicolinate; it reads GT.

This sequence belongs to the DapB family.

The protein resides in the cytoplasm. It catalyses the reaction (S)-2,3,4,5-tetrahydrodipicolinate + NAD(+) + H2O = (2S,4S)-4-hydroxy-2,3,4,5-tetrahydrodipicolinate + NADH + H(+). The enzyme catalyses (S)-2,3,4,5-tetrahydrodipicolinate + NADP(+) + H2O = (2S,4S)-4-hydroxy-2,3,4,5-tetrahydrodipicolinate + NADPH + H(+). The protein operates within amino-acid biosynthesis; L-lysine biosynthesis via DAP pathway; (S)-tetrahydrodipicolinate from L-aspartate: step 4/4. Functionally, catalyzes the conversion of 4-hydroxy-tetrahydrodipicolinate (HTPA) to tetrahydrodipicolinate. This is 4-hydroxy-tetrahydrodipicolinate reductase from Helicobacter hepaticus (strain ATCC 51449 / 3B1).